The primary structure comprises 256 residues: Protein N-terminal and lysine N-methyltransferase EFM7 (256 aa).

The interval M1 to K26 is disordered. Residues W64, G90–A92, D112, W145, and S168 contribute to the S-adenosyl-L-methionine site.

The protein belongs to the class I-like SAM-binding methyltransferase superfamily. EFM7 family.

It localises to the cytoplasm. S-adenosyl-L-methionine-dependent protein methyltransferase that trimethylates the N-terminal glycine 'Gly-2' of elongation factor 1-alpha, before also catalyzing the mono- and dimethylation of 'Lys-3'. The protein is Protein N-terminal and lysine N-methyltransferase EFM7 of Candida glabrata (strain ATCC 2001 / BCRC 20586 / JCM 3761 / NBRC 0622 / NRRL Y-65 / CBS 138) (Yeast).